A 227-amino-acid polypeptide reads, in one-letter code: Cytidylate kinase (227 aa).

7 to 15 contacts ATP; sequence GPAGSGKST.

It belongs to the cytidylate kinase family. Type 1 subfamily.

Its subcellular location is the cytoplasm. It catalyses the reaction CMP + ATP = CDP + ADP. The enzyme catalyses dCMP + ATP = dCDP + ADP. The sequence is that of Cytidylate kinase from Salinibacter ruber (strain DSM 13855 / M31).